Reading from the N-terminus, the 648-residue chain is ATPase family AAA domain-containing protein 3B (648 aa).

Disordered stretches follow at residues 1–54 (MSWL…DPTG) and 111–134 (QAEE…QYQD). The residue at position 2 (serine 2) is an N-acetylserine. Topologically, residues 2-246 (SWLFGVNKGP…FRAFVTDRDK (245 aa)) are mitochondrial intermembrane. Positions 17–26 (GPPPPLPPAQ) are enriched in pro residues. 2 stretches are compositionally biased toward basic and acidic residues: residues 32–48 (GGDR…DKWS) and 111–125 (QAEE…ETRQ). Residues 69–214 (RYAKEALNLA…DIIREQIRLK (146 aa)) adopt a coiled-coil conformation. An intramembrane region (helical) is located at residues 247–264 (VTATVAGLTLLAVGVYSA). Residues 265 to 648 (KNATAVTGRF…PFCPPGHPLL (384 aa)) lie on the Mitochondrial intermembrane side of the membrane. 352–359 (GPPGTGKT) is a binding site for ATP. Lysine 427 and lysine 495 each carry N6-acetyllysine.

The protein belongs to the AAA ATPase family. In terms of assembly, forms heterooligomers with ATAD3A. Interacts with components of the mitochondrial ribosome, including MRPL11 and MRPS18B, and with other proteins involved in mitochondrial RNA metabolism, possibly via interaction with ATAD3A. Interacts with GADD45GIP1. In terms of tissue distribution, tends to be down-regulated in differentiated cells and re-expressed in pluripotent stem cells or cancer cells (at protein level).

The protein resides in the mitochondrion inner membrane. Functionally, may play a role in a mitochondrial network organization typical for stem cells, characterized by reduced mitochondrial metabolism, low mtDNA copies and fragmentated mitochondrial network. May act by suppressing ATAD3A function, interfering with ATAD3A interaction with matrix nucleoid complexes. This is ATPase family AAA domain-containing protein 3B (ATAD3B) from Homo sapiens (Human).